The following is a 144-amino-acid chain: 3-hydroxyacyl-[acyl-carrier-protein] dehydratase FabZ (144 aa).

Residue His47 is part of the active site.

It belongs to the thioester dehydratase family. FabZ subfamily.

The protein localises to the cytoplasm. It catalyses the reaction a (3R)-hydroxyacyl-[ACP] = a (2E)-enoyl-[ACP] + H2O. In terms of biological role, involved in unsaturated fatty acids biosynthesis. Catalyzes the dehydration of short chain beta-hydroxyacyl-ACPs and long chain saturated and unsaturated beta-hydroxyacyl-ACPs. The chain is 3-hydroxyacyl-[acyl-carrier-protein] dehydratase FabZ from Alcanivorax borkumensis (strain ATCC 700651 / DSM 11573 / NCIMB 13689 / SK2).